The sequence spans 83 residues: Carboxysome shell vertex protein CsoS4A (83 aa).

Residues methionine 1–aspartate 78 enclose the BMV domain.

This sequence belongs to the CcmL/EutN family. CsoS4 subfamily. As to quaternary structure, homopentamer.

The protein resides in the carboxysome. Its function is as follows. Probably forms vertices in the carboxysome, a polyhedral inclusion where RuBisCO (ribulose bisphosphate carboxylase, cbbL-cbbS) is sequestered. Has been modeled to induce curvature upon insertion into an otherwise flat hexagonal layer of major carboxysome subunits. A minor shell protein, only 12 pentamers of CsoS4A/CsoS4B are calculated to be present in each carboxysome. The 2 CsoS4 proteins contribute to the impermeability of the carboxysome to CO(2). Unlike beta-carboxysomes, alpha-carboxysomes (Cb) can form without cargo protein. CsoS2 is essential for Cb formation and is also capable of targeting foreign proteins to the Cb. The Cb shell assembles with the aid of CsoS2; CsoS1A, CsoS1B and CsoS1C form the majority of the shell while CsoS4A and CsoS4B form vertices. CsoS1D forms pseudohexamers that probably control metabolite flux into and out of the shell. The polypeptide is Carboxysome shell vertex protein CsoS4A (Halothiobacillus neapolitanus (strain ATCC 23641 / c2) (Thiobacillus neapolitanus)).